The chain runs to 111 residues: uncharacterized protein (111 aa).

A helical transmembrane segment spans residues 64 to 86 (VLCWLVLPLYCCNLLNLFFNIFL).

Its subcellular location is the membrane. This is an uncharacterized protein from Saccharomyces cerevisiae (strain ATCC 204508 / S288c) (Baker's yeast).